Reading from the N-terminus, the 137-residue chain is uncharacterized protein (137 aa).

Residues 20–42 (TVLAFKGEGALALAGLLVMAAVA) form a helical membrane-spanning segment.

It localises to the host membrane. This is an uncharacterized protein from Dryophytes versicolor (chameleon treefrog).